A 761-amino-acid chain; its full sequence is Xaa-Pro dipeptidyl-peptidase (761 aa).

Active-site charge relay system residues include Ser-347, Asp-467, and His-497.

Belongs to the peptidase S15 family. In terms of assembly, homodimer.

The protein resides in the cytoplasm. The enzyme catalyses Hydrolyzes Xaa-Pro-|- bonds to release unblocked, N-terminal dipeptides from substrates including Ala-Pro-|-p-nitroanilide and (sequentially) Tyr-Pro-|-Phe-Pro-|-Gly-Pro-|-Ile.. In terms of biological role, removes N-terminal dipeptides sequentially from polypeptides having unsubstituted N-termini provided that the penultimate residue is proline. The chain is Xaa-Pro dipeptidyl-peptidase from Streptococcus agalactiae serotype Ia (strain ATCC 27591 / A909 / CDC SS700).